The sequence spans 128 residues: Large ribosomal subunit protein bL19 (128 aa).

The protein belongs to the bacterial ribosomal protein bL19 family.

Its function is as follows. This protein is located at the 30S-50S ribosomal subunit interface and may play a role in the structure and function of the aminoacyl-tRNA binding site. This chain is Large ribosomal subunit protein bL19, found in Mesoplasma florum (strain ATCC 33453 / NBRC 100688 / NCTC 11704 / L1) (Acholeplasma florum).